A 352-amino-acid chain; its full sequence is MTIAIGTPEEKRGLFDDMDDWLRRDRFVFVGWSGLLLLPCAYFAVGGWLTGTTFVTSWYTHGLASSYLEGCNVLTAAVSTPANSMAHSLLLLWGPEAQGDFTRWCQLGGLWTFIALHGSFGLIGFMLRQFEIARAIGLRPYNAIAFSGPISVFVSVFLIYPLGQSGWFFAPSFGVAAIFRFILFFQGFHNWTLNPFHMMGVAGVLGAALLCAIHGATVENTLFEDGDGANTFRAFNPTQAEETYSMVTANRFWSQIFGIAFSNKRWLHFFMLFVPVTGLWMSAIGVVGLALNLRAYDFVSQELRAAEDPEFETFYTKNLLLNEGIRAWMAAQDQPHEKLVFPEEVLPRGNAL.

Thr-2 carries the post-translational modification N-acetylthreonine. Phosphothreonine is present on Thr-2. The helical transmembrane segment at 40–60 (CAYFAVGGWLTGTTFVTSWYT) threads the bilayer. His-117 lines the chlorophyll a pocket. The helical transmembrane segment at 124–140 (GFMLRQFEIARAIGLRP) threads the bilayer. Residues Gln-129 and Asn-142 each coordinate pheophytin a. Residues 152 to 165 (VFVSVFLIYPLGQS) traverse the membrane as a helical segment. His-197 contacts chlorophyll a. A helical membrane pass occupies residues 207 to 227 (AALLCAIHGATVENTLFEDGD). 2 residues coordinate a plastoquinone: His-214 and Phe-261. His-214 is a Fe cation binding site. His-268 contributes to the Fe cation binding site. Residues 278–294 (GLWMSAIGVVGLALNLR) form a helical membrane-spanning segment.

It belongs to the reaction center PufL/M/PsbA/D family. PSII is composed of 1 copy each of membrane proteins PsbA, PsbB, PsbC, PsbD, PsbE, PsbF, PsbH, PsbI, PsbJ, PsbK, PsbL, PsbM, PsbT, PsbX, PsbY, PsbZ, Psb30/Ycf12, at least 3 peripheral proteins of the oxygen-evolving complex and a large number of cofactors. It forms dimeric complexes. The D1/D2 heterodimer binds P680, chlorophylls that are the primary electron donor of PSII, and subsequent electron acceptors. It shares a non-heme iron and each subunit binds pheophytin, quinone, additional chlorophylls, carotenoids and lipids. There is also a Cl(-1) ion associated with D1 and D2, which is required for oxygen evolution. The PSII complex binds additional chlorophylls, carotenoids and specific lipids. is required as a cofactor.

The protein localises to the plastid. Its subcellular location is the chloroplast thylakoid membrane. It carries out the reaction 2 a plastoquinone + 4 hnu + 2 H2O = 2 a plastoquinol + O2. In terms of biological role, photosystem II (PSII) is a light-driven water:plastoquinone oxidoreductase that uses light energy to abstract electrons from H(2)O, generating O(2) and a proton gradient subsequently used for ATP formation. It consists of a core antenna complex that captures photons, and an electron transfer chain that converts photonic excitation into a charge separation. The D1/D2 (PsbA/PsbD) reaction center heterodimer binds P680, the primary electron donor of PSII as well as several subsequent electron acceptors. D2 is needed for assembly of a stable PSII complex. The protein is Photosystem II D2 protein of Nephroselmis olivacea (Green alga).